Reading from the N-terminus, the 354-residue chain is Selection and upkeep of intraepithelial T-cells protein 10 (354 aa).

An N-terminal signal peptide occupies residues 1 to 52 (MFLRTQMEQSQADIFALIKPHFGVMESSASYLPGFFMTFLLLQTTVLTQAMS). In terms of domain architecture, Ig-like V-type spans 53-141 (LDIQINIQVP…TNREKKRSVV (89 aa)). Over 53–158 (LDIQINIQVP…SEYMSLMSNK (106 aa)) the chain is Extracellular. The cysteines at positions 71 and 125 are disulfide-linked. N129 carries an N-linked (GlcNAc...) asparagine glycan. A helical membrane pass occupies residues 159–179 (FSCPLTYLFIIIFLNCLKGML). The Cytoplasmic portion of the chain corresponds to 180–209 (DFCCLKGKPVYFRELINKIKEVLNIKMRAC). A helical membrane pass occupies residues 210–230 (CTLIWEFLLIVLYIAFLPFYL). Residues 231-252 (KFRSRASILDDAYPLHSNWLWD) are Extracellular-facing. A helical transmembrane segment spans residues 253-273 (ICIVLSVLMIFFTGLSLFLLW). At 274-354 (TLNCYGQMSY…RLDCSLNWKT (81 aa)) the chain is on the cytoplasmic side.

It belongs to the SKINT family. As to expression, expressed in skin and thymus.

The protein localises to the membrane. Its function is as follows. May act by engaging a cell surface molecule on immature T-cells in the embryonic thymus. The polypeptide is Selection and upkeep of intraepithelial T-cells protein 10 (Skint10) (Mus musculus (Mouse)).